A 302-amino-acid chain; its full sequence is UDP-N-acetylenolpyruvoylglucosamine reductase (302 aa).

One can recognise an FAD-binding PCMH-type domain in the interval 29 to 192 (KVGGPVDLLA…VAVTLQLSED (164 aa)). The active site involves R172. Residue S221 is the Proton donor of the active site. The active site involves E291.

The protein belongs to the MurB family. It depends on FAD as a cofactor.

Its subcellular location is the cytoplasm. The catalysed reaction is UDP-N-acetyl-alpha-D-muramate + NADP(+) = UDP-N-acetyl-3-O-(1-carboxyvinyl)-alpha-D-glucosamine + NADPH + H(+). The protein operates within cell wall biogenesis; peptidoglycan biosynthesis. Its function is as follows. Cell wall formation. This Trichlorobacter lovleyi (strain ATCC BAA-1151 / DSM 17278 / SZ) (Geobacter lovleyi) protein is UDP-N-acetylenolpyruvoylglucosamine reductase.